Here is a 351-residue protein sequence, read N- to C-terminus: Molybdenum import ATP-binding protein ModC (351 aa).

Positions 1-229 (MLKINVKKQL…PLFLPWKLED (229 aa)) constitute an ABC transporter domain. 31–38 (GLSGSGKT) is an ATP binding site. A Mop domain is found at 289–351 (KTSIRNILHG…FAQIKAVSVL (63 aa)).

It belongs to the ABC transporter superfamily. Molybdate importer (TC 3.A.1.8) family. In terms of assembly, the complex is composed of two ATP-binding proteins (ModC), two transmembrane proteins (ModB) and a solute-binding protein (ModA).

Its subcellular location is the cell inner membrane. The catalysed reaction is molybdate(out) + ATP + H2O = molybdate(in) + ADP + phosphate + H(+). Part of the ABC transporter complex ModABC involved in molybdenum import. Responsible for energy coupling to the transport system. The polypeptide is Molybdenum import ATP-binding protein ModC (Pasteurella multocida (strain Pm70)).